The sequence spans 164 residues: Phosphopantetheine adenylyltransferase (164 aa).

Position 9 (Ser-9) interacts with substrate. ATP is bound by residues 9–10 (SF) and His-17. Substrate is bound by residues Lys-41, Leu-74, and Arg-88. ATP is bound by residues 89–91 (GIR), Glu-99, and 124–130 (YAEVSST).

This sequence belongs to the bacterial CoaD family. In terms of assembly, homohexamer. Mg(2+) is required as a cofactor.

Its subcellular location is the cytoplasm. The enzyme catalyses (R)-4'-phosphopantetheine + ATP + H(+) = 3'-dephospho-CoA + diphosphate. It functions in the pathway cofactor biosynthesis; coenzyme A biosynthesis; CoA from (R)-pantothenate: step 4/5. Reversibly transfers an adenylyl group from ATP to 4'-phosphopantetheine, yielding dephospho-CoA (dPCoA) and pyrophosphate. The chain is Phosphopantetheine adenylyltransferase from Chromobacterium violaceum (strain ATCC 12472 / DSM 30191 / JCM 1249 / CCUG 213 / NBRC 12614 / NCIMB 9131 / NCTC 9757 / MK).